We begin with the raw amino-acid sequence, 572 residues long: Far upstream element-binding protein 3 (572 aa).

N-acetylalanine is present on alanine 2. Glycyl lysine isopeptide (Lys-Gly) (interchain with G-Cter in SUMO2) cross-links involve residues lysine 15 and lysine 57. Phosphothreonine is present on threonine 76. KH domains lie at 77–141, 162–228, 253–317, and 354–421; these read VITE…KRLL, STIQ…REMV, GGSI…AHII, and VQEI…RQLI. Serine 296 is subject to Phosphoserine. The segment at 426–521 is disordered; that stretch reads GGTNLGAPGA…SQPNYSKAWE (96 aa). Low complexity predominate over residues 496 to 514; the sequence is QQPTQQVPSQQSQPQSSQP. Phosphoserine occurs at positions 539 and 569.

Detected in a number of cell lines.

The protein localises to the nucleus. Functionally, may interact with single-stranded DNA from the far-upstream element (FUSE). May activate gene expression. The chain is Far upstream element-binding protein 3 (FUBP3) from Homo sapiens (Human).